Here is a 412-residue protein sequence, read N- to C-terminus: Mitochondrial distribution and morphology protein 12 (412 aa).

The SMP-LTD domain occupies 1-410 (MSIDLEWAKL…FPNFHTLVMG (410 aa)). Disordered stretches follow at residues 66-96 (EDDEDDSSTSPVKVTEGQLDAHGGEDDDGYE), 108-136 (YTEGGGHGGNGSHLPMHLRHPPLRSSPTD), 166-238 (QGSG…QQEN), and 314-354 (PAGD…KPLP). Low complexity predominate over residues 220–238 (NQPVFPSQQPQQQQPQQEN).

The protein belongs to the MDM12 family. As to quaternary structure, component of the ER-mitochondria encounter structure (ERMES) or MDM complex, composed of MMM1, MDM10, MDM12 and MDM34. An MMM1 homodimer associates with one molecule of MDM12 on each side in a pairwise head-to-tail manner, and the SMP-LTD domains of MMM1 and MDM12 generate a continuous hydrophobic tunnel for phospholipid trafficking.

The protein localises to the mitochondrion outer membrane. It localises to the endoplasmic reticulum membrane. Functionally, component of the ERMES/MDM complex, which serves as a molecular tether to connect the endoplasmic reticulum (ER) and mitochondria. Components of this complex are involved in the control of mitochondrial shape and protein biogenesis, and function in nonvesicular lipid trafficking between the ER and mitochondria. MDM12 is required for the interaction of the ER-resident membrane protein MMM1 and the outer mitochondrial membrane-resident beta-barrel protein MDM10. The MDM12-MMM1 subcomplex functions in the major beta-barrel assembly pathway that is responsible for biogenesis of all mitochondrial outer membrane beta-barrel proteins, and acts in a late step after the SAM complex. The MDM10-MDM12-MMM1 subcomplex further acts in the TOM40-specific pathway after the action of the MDM12-MMM1 complex. Essential for establishing and maintaining the structure of mitochondria and maintenance of mtDNA nucleoids. This Coprinopsis cinerea (strain Okayama-7 / 130 / ATCC MYA-4618 / FGSC 9003) (Inky cap fungus) protein is Mitochondrial distribution and morphology protein 12.